Reading from the N-terminus, the 325-residue chain is Phospholipid phosphatase-related protein type 1 (325 aa).

3 helical membrane passes run 11 to 31 (YSII…TVLL), 67 to 87 (FISP…IIFI), and 127 to 147 (FIGV…AGQV). Asn-163 carries N-linked (GlcNAc...) asparagine glycosylation. 3 helical membrane-spanning segments follow: residues 201–218 (AALS…ITST), 230–247 (VLCL…LNRV), and 257–277 (VIGG…CVVH). Asn-316 carries an N-linked (GlcNAc...) asparagine glycan.

It belongs to the PA-phosphatase related phosphoesterase family.

Its subcellular location is the cell membrane. It localises to the cell projection. It is found in the neuron projection. In terms of biological role, may play a role in neurite outgrowth and neurogenesis. The polypeptide is Phospholipid phosphatase-related protein type 1 (Xenopus tropicalis (Western clawed frog)).